Reading from the N-terminus, the 112-residue chain is Nitrogen regulatory protein P-II 1 (112 aa).

Tyr-51 is subject to O-UMP-tyrosine.

This sequence belongs to the P(II) protein family. As to quaternary structure, homotrimer. Post-translationally, uridylylated/deuridylylated by GlnD.

In terms of biological role, P-II indirectly controls the transcription of the glutamine synthetase gene (GlnA). P-II prevents NR-II-catalyzed conversion of NR-I to NR-I-phosphate, the transcriptional activator of GlnA. When P-II is uridylylated to P-II-UMP, these events are reversed. When the ratio of Gln to 2-ketoglutarate decreases, P-II is uridylylated to P-II-UMP, which causes the deadenylation of glutamine synthetase by GlnE, so activating the enzyme. This Escherichia coli O157:H7 protein is Nitrogen regulatory protein P-II 1 (glnB).